The chain runs to 302 residues: Ubiquinone biosynthesis protein COQ4, mitochondrial (302 aa).

The transit peptide at 1-19 (MNSSPARAVRALVQSQSRQ) directs the protein to the mitochondrion. Zn(2+)-binding residues include H176, D177, H180, and E192. The span at 268 to 282 (PPPDMRDARKRERDA) shows a compositional bias: basic and acidic residues. A disordered region spans residues 268-302 (PPPDMRDARKRERDARRRRKQLETEAQQGLDAASL).

The protein belongs to the COQ4 family. Component of a multi-subunit COQ enzyme complex, composed of at least COQ3, COQ4, COQ5, COQ6, COQ7 and COQ9. Requires Zn(2+) as cofactor.

The protein localises to the mitochondrion inner membrane. The catalysed reaction is a 4-hydroxy-3-methoxy-5-(all-trans-polyprenyl)benzoate + H(+) = a 2-methoxy-6-(all-trans-polyprenyl)phenol + CO2. It functions in the pathway cofactor biosynthesis; ubiquinone biosynthesis. Lyase that catalyzes the C1-decarboxylation of 4-hydroxy-3-methoxy-5-(all-trans-polyprenyl)benzoic acid into 2-methoxy-6-(all-trans-polyprenyl)phenol during ubiquinone biosynthesis. In Pyricularia oryzae (strain 70-15 / ATCC MYA-4617 / FGSC 8958) (Rice blast fungus), this protein is Ubiquinone biosynthesis protein COQ4, mitochondrial.